The sequence spans 151 residues: 3-hydroxyacyl-[acyl-carrier-protein] dehydratase FabZ (151 aa).

The active site involves H52.

Belongs to the thioester dehydratase family. FabZ subfamily.

The protein resides in the cytoplasm. The enzyme catalyses a (3R)-hydroxyacyl-[ACP] = a (2E)-enoyl-[ACP] + H2O. Involved in unsaturated fatty acids biosynthesis. Catalyzes the dehydration of short chain beta-hydroxyacyl-ACPs and long chain saturated and unsaturated beta-hydroxyacyl-ACPs. The polypeptide is 3-hydroxyacyl-[acyl-carrier-protein] dehydratase FabZ (fabZ1) (Lactococcus lactis subsp. lactis (strain IL1403) (Streptococcus lactis)).